A 185-amino-acid polypeptide reads, in one-letter code: Ribosome-recycling factor (185 aa).

This sequence belongs to the RRF family.

Its subcellular location is the cytoplasm. Functionally, responsible for the release of ribosomes from messenger RNA at the termination of protein biosynthesis. May increase the efficiency of translation by recycling ribosomes from one round of translation to another. This chain is Ribosome-recycling factor, found in Clostridium botulinum (strain Alaska E43 / Type E3).